A 122-amino-acid polypeptide reads, in one-letter code: Urocortin (122 aa).

A signal peptide spans 1–25; the sequence is MRQRGRATLLVALLLLVQLRPESSQ. Positions 26–80 are excised as a propeptide; the sequence is WSPAAAAANVVQDPNLRWNPGVRNQGGGVRALLLLLAERFPRRAGSEPAGERQRR. Position 120 is a valine amide (Val-120).

Belongs to the sauvagine/corticotropin-releasing factor/urotensin I family. Interacts with CRHR1 and CRHR2 (via their N-terminal extracellular domain).

It is found in the secreted. In terms of biological role, acts in vitro to stimulate the secretion of adrenocorticotropic hormone (ACTH). Binds with high affinity to CRF receptor types 1, 2-alpha, and 2-beta. Plays a role in the establishment of normal hearing thresholds. Reduces food intake and regulates ghrelin levels in gastric body and plasma. The polypeptide is Urocortin (Ucn) (Rattus norvegicus (Rat)).